The primary structure comprises 365 residues: Chorismate synthase (365 aa).

Arg48 and Arg54 together coordinate NADP(+). FMN contacts are provided by residues 125–127, 237–238, Gly277, 292–296, and Arg318; these read RSS, NA, and KPTSS.

This sequence belongs to the chorismate synthase family. Homotetramer. The cofactor is FMNH2.

It carries out the reaction 5-O-(1-carboxyvinyl)-3-phosphoshikimate = chorismate + phosphate. The protein operates within metabolic intermediate biosynthesis; chorismate biosynthesis; chorismate from D-erythrose 4-phosphate and phosphoenolpyruvate: step 7/7. In terms of biological role, catalyzes the anti-1,4-elimination of the C-3 phosphate and the C-6 proR hydrogen from 5-enolpyruvylshikimate-3-phosphate (EPSP) to yield chorismate, which is the branch point compound that serves as the starting substrate for the three terminal pathways of aromatic amino acid biosynthesis. This reaction introduces a second double bond into the aromatic ring system. The protein is Chorismate synthase of Paracidovorax citrulli (strain AAC00-1) (Acidovorax citrulli).